The chain runs to 501 residues: Zinc finger and SCAN domain-containing protein 12 (501 aa).

Residues Lys20 and Lys26 each participate in a glycyl lysine isopeptide (Lys-Gly) (interchain with G-Cter in SUMO2) cross-link. The SCAN box domain maps to 51–132 (QFCYQETSGP…DLERELDELG (82 aa)). The tract at residues 175–194 (REAQEEQVSGVETGNEPRNV) is disordered. Residues 180–194 (EQVSGVETGNEPRNV) show a composition bias toward polar residues. A Glycyl lysine isopeptide (Lys-Gly) (interchain with G-Cter in SUMO2) cross-link involves residue Lys197. The disordered stretch occupies residues 223–255 (EAHNPGEESSGISHEDSQPLRNENGVNSPANSE). Positions 241-253 (PLRNENGVNSPAN) are enriched in polar residues. 6 consecutive C2H2-type zinc fingers follow at residues 269–291 (HGCDECGKSFTQHSRLIEHKRVH), 297–319 (YKCEVCGKTFRWRTVLIRHKVVH), 325–347 (YKCNECGRAFGQWSALNQHQRLH), 353–375 (YHCNECGKAFCQKAGLFHHLKSH), 381–403 (YQCLQCNKSFNRRSTLSQHQGVH), and 409–431 (YECNDCGKAFVYNSSLATHQETH). The interval 429–450 (ETHHKEKPFTQSGPIQQQRNHT) is disordered. Polar residues predominate over residues 437-447 (FTQSGPIQQQR). The segment at 455 to 477 (YKCSVCGKAFIQKISLIEHEQIH) adopts a C2H2-type 7 zinc-finger fold. A C2H2-type 8; degenerate zinc finger spans residues 483–501 (YKCAEGGKAFIQMSELTEH).

Belongs to the krueppel C2H2-type zinc-finger protein family. In terms of tissue distribution, testis specific.

The protein resides in the nucleus. Functionally, may be involved in transcriptional regulation. The polypeptide is Zinc finger and SCAN domain-containing protein 12 (Zscan12) (Mus musculus (Mouse)).